The primary structure comprises 623 residues: V-type proton ATPase catalytic subunit A (623 aa).

252–259 (GAFGCGKT) contributes to the ATP binding site.

The protein belongs to the ATPase alpha/beta chains family. As to quaternary structure, V-ATPase is a heteromultimeric enzyme composed of a peripheral catalytic V1 complex (main components: subunits A, B, C, D, E, and F) attached to an integral membrane V0 proton pore complex (main component: the proteolipid protein).

It carries out the reaction ATP + H2O + 4 H(+)(in) = ADP + phosphate + 5 H(+)(out). In terms of biological role, catalytic subunit of the peripheral V1 complex of vacuolar ATPase. V-ATPase vacuolar ATPase is responsible for acidifying a variety of intracellular compartments in eukaryotic cells. The polypeptide is V-type proton ATPase catalytic subunit A (Brassica napus (Rape)).